The following is a 581-amino-acid chain: MDEELPDGVVFKDHSFSSDLLRQLNGLRQSKILTDVSICSGAWEVPCHRSVLASSSPYFKAMFCSHFRESREAKVQMKGISSTTLEQVITYVYTGEVHISAANVLPLMEAAAMLQYPRVFEACSSYLQSQLAPSNCLGLVRLAEILSCDSLKKKAKEVALTYFPEVAASADLKELCAMELRDYLGDDRLCGEEEKVFEALMAWVKHDLQARWRHMQELLQQVRLQYIHPAFFHHFIANDALLQSSPACQAILEMARKQIFSLYGPSAQDCKLLWRMPPRSSYQDFLLLLGGRKDNQQTTRDVLLYSGQTGQWQSLAKLPIRLYKASAVTLHRSVYVLGGMTVSEGKSLISCGVYIFSLKLNQWRVGEPMLAARYSHRSTTHRNFIFSIGGTGEGQELLASMERYDSIRDVWESMAGMPVAVLHPAVAVKDQRLYLFGGEDIMQNPVRLIQVYHISRNTWYKMETRMIKNVCAPAVVLGEQIVIVGGYTRRILAYDPQSNKFVKCADMKDRRMHHGATVMGNKLYVTGGRRLTTDCNIEDSASFDCYDPETDTWTSQGQLPHKLFDHACLTLQCIPHMTSLS.

In terms of domain architecture, BTB spans 34–101 (TDVSICSGAW…VYTGEVHISA (68 aa)). Positions 136–237 (CLGLVRLAEI…HPAFFHHFIA (102 aa)) constitute a BACK domain. Kelch repeat units follow at residues 285-332 (FLLL…TLHR), 334-383 (VYVL…THRN), 384-431 (FIFS…VKDQ), 433-479 (LYLF…VLGE), 480-521 (QIVI…VMGN), and 523-573 (LYVT…TLQC).

This Mus musculus (Mouse) protein is Kelch-like protein 38 (Klhl38).